The primary structure comprises 156 residues: Small ribosomal subunit protein uS7 (156 aa).

Belongs to the universal ribosomal protein uS7 family. In terms of assembly, part of the 30S ribosomal subunit. Contacts proteins S9 and S11.

Functionally, one of the primary rRNA binding proteins, it binds directly to 16S rRNA where it nucleates assembly of the head domain of the 30S subunit. Is located at the subunit interface close to the decoding center, probably blocks exit of the E-site tRNA. The protein is Small ribosomal subunit protein uS7 of Lactobacillus johnsonii (strain CNCM I-12250 / La1 / NCC 533).